A 130-amino-acid chain; its full sequence is Mediator of RNA polymerase II transcription subunit 31 (130 aa).

Belongs to the Mediator complex subunit 31 family. As to quaternary structure, component of the Mediator complex.

It localises to the nucleus. Component of the Mediator complex, a coactivator involved in the regulated transcription of nearly all RNA polymerase II-dependent genes. Mediator functions as a bridge to convey information from gene-specific regulatory proteins to the basal RNA polymerase II transcription machinery. Mediator is recruited to promoters by direct interactions with regulatory proteins and serves as a scaffold for the assembly of a functional preinitiation complex with RNA polymerase II and the general transcription factors. This is Mediator of RNA polymerase II transcription subunit 31 (SOH1) from Candida glabrata (strain ATCC 2001 / BCRC 20586 / JCM 3761 / NBRC 0622 / NRRL Y-65 / CBS 138) (Yeast).